The chain runs to 350 residues: Phenylalanine--tRNA ligase alpha subunit (350 aa).

Residue Glu-259 participates in Mg(2+) binding.

This sequence belongs to the class-II aminoacyl-tRNA synthetase family. Phe-tRNA synthetase alpha subunit type 1 subfamily. Tetramer of two alpha and two beta subunits. Mg(2+) is required as a cofactor.

The protein resides in the cytoplasm. It catalyses the reaction tRNA(Phe) + L-phenylalanine + ATP = L-phenylalanyl-tRNA(Phe) + AMP + diphosphate + H(+). In Rickettsia typhi (strain ATCC VR-144 / Wilmington), this protein is Phenylalanine--tRNA ligase alpha subunit.